The sequence spans 1394 residues: DNA-directed RNA polymerase subunit beta' (1394 aa).

Residues C70, C72, C85, and C88 each coordinate Zn(2+). Mg(2+) is bound by residues D470, D472, and D474. Zn(2+) contacts are provided by C815, C889, C896, and C899.

The protein belongs to the RNA polymerase beta' chain family. In terms of assembly, the RNAP catalytic core consists of 2 alpha, 1 beta, 1 beta' and 1 omega subunit. When a sigma factor is associated with the core the holoenzyme is formed, which can initiate transcription. Mg(2+) serves as cofactor. The cofactor is Zn(2+).

It catalyses the reaction RNA(n) + a ribonucleoside 5'-triphosphate = RNA(n+1) + diphosphate. Functionally, DNA-dependent RNA polymerase catalyzes the transcription of DNA into RNA using the four ribonucleoside triphosphates as substrates. The sequence is that of DNA-directed RNA polymerase subunit beta' from Anaeromyxobacter sp. (strain K).